A 140-amino-acid polypeptide reads, in one-letter code: Nucleoside diphosphate kinase (140 aa).

Lys11, Phe59, Arg87, Thr93, Arg104, and Asn114 together coordinate ATP. The active-site Pros-phosphohistidine intermediate is the His117.

This sequence belongs to the NDK family. In terms of assembly, homotetramer. It depends on Mg(2+) as a cofactor.

The protein resides in the cytoplasm. It carries out the reaction a 2'-deoxyribonucleoside 5'-diphosphate + ATP = a 2'-deoxyribonucleoside 5'-triphosphate + ADP. It catalyses the reaction a ribonucleoside 5'-diphosphate + ATP = a ribonucleoside 5'-triphosphate + ADP. In terms of biological role, major role in the synthesis of nucleoside triphosphates other than ATP. The ATP gamma phosphate is transferred to the NDP beta phosphate via a ping-pong mechanism, using a phosphorylated active-site intermediate. The polypeptide is Nucleoside diphosphate kinase (Cereibacter sphaeroides (strain ATCC 17029 / ATH 2.4.9) (Rhodobacter sphaeroides)).